The chain runs to 461 residues: MALWGGRFSQESSALFKLFNDSLPVDYRLIEQDIIGSIAWASAITQVGVLTTDECTQLHAALNELLAETSTNPELIIASGAEDIHSFVEQSLIAKVGDLGKKLHTGRSRNDQVATDLKLWCKKEGQELLELLGKLRTALIELAEREIDAVMPGYTHLQRAQPVLFGHWCLAYVEMFERDISRLQDALKRADTCPLGTGALAGTAYPMDRVKLAQSLGFASPTLNSLDTVSDRDHVVEICSDASISMMHLSRMAEDLIFFNSGEAGFIELDDEVTSGSSLMPQKKNPDALELIRGKTGRVYGSLIGILTTMKALPLAYNKDMQEDKEGLFDVMDSWAICLEMAALVLSGLQVNRERTLSAAQQGYANSTELADYLVAKGMPFREAHHVVGEAVVNAIAKQTPLEDLPLEELQSFSAIIEADVYECLTIESCLAKREALGGTSLPQVKSALAGKQVIPIALSI.

This sequence belongs to the lyase 1 family. Argininosuccinate lyase subfamily.

The protein resides in the cytoplasm. It catalyses the reaction 2-(N(omega)-L-arginino)succinate = fumarate + L-arginine. The protein operates within amino-acid biosynthesis; L-arginine biosynthesis; L-arginine from L-ornithine and carbamoyl phosphate: step 3/3. This chain is Argininosuccinate lyase, found in Shewanella piezotolerans (strain WP3 / JCM 13877).